Reading from the N-terminus, the 296-residue chain is Complex I intermediate-associated protein 30, mitochondrial (296 aa).

The transit peptide at Met-1–Arg-29 directs the protein to the mitochondrion.

Belongs to the CIA30 family. Associates with mitochondrial complex I assembly intermediates during its biogenesis.

It localises to the mitochondrion. In terms of biological role, chaperone protein involved in the assembly of the mitochondrial NADH:ubiquinone oxidoreductase complex (complex I). This is Complex I intermediate-associated protein 30, mitochondrial from Drosophila melanogaster (Fruit fly).